The primary structure comprises 434 residues: Nicotinate phosphoribosyltransferase (434 aa).

Histidine 242 is subject to Phosphohistidine; by autocatalysis.

This sequence belongs to the NAPRTase family. Post-translationally, transiently phosphorylated on a His residue during the reaction cycle. Phosphorylation strongly increases the affinity for substrates and increases the rate of nicotinate D-ribonucleotide production. Dephosphorylation regenerates the low-affinity form of the enzyme, leading to product release.

It carries out the reaction nicotinate + 5-phospho-alpha-D-ribose 1-diphosphate + ATP + H2O = nicotinate beta-D-ribonucleotide + ADP + phosphate + diphosphate. It participates in cofactor biosynthesis; NAD(+) biosynthesis; nicotinate D-ribonucleotide from nicotinate: step 1/1. Functionally, catalyzes the synthesis of beta-nicotinate D-ribonucleotide from nicotinate and 5-phospho-D-ribose 1-phosphate at the expense of ATP. This Mesorhizobium japonicum (strain LMG 29417 / CECT 9101 / MAFF 303099) (Mesorhizobium loti (strain MAFF 303099)) protein is Nicotinate phosphoribosyltransferase.